Here is a 413-residue protein sequence, read N- to C-terminus: uncharacterized protein (413 aa).

4 helical membrane passes run 22–42 (VLLVSILSKIGISISIFTLIL), 270–290 (IIYVTLFLIIIISCFSVISIC), 312–332 (ILIQLIFFYYGMRFIIIGNLI), and 379–399 (LIIIFISTLTIGIVANWYPIY).

This sequence belongs to the ABC-4 integral membrane protein family. LolC/E subfamily.

The protein localises to the cell membrane. This is an uncharacterized protein from Buchnera aphidicola subsp. Schizaphis graminum (strain Sg).